Here is a 483-residue protein sequence, read N- to C-terminus: MKFIIKLFPEITIKSQSVRIRFIKILTSNIRNVLSTLGDDITVVRHWDNIVVVSKDESKSEAVCDALTRIPGIHHFLQVEEHSYTDLHNIFEQTFAAFGHLVENKTFCVRAKRRGKHSFTSNEVERYVGGGFNQHVESAKVKLTRPDVTINLEIEDDKLILVNARYEGIGGFPIGTQEDVLSLISGGYDSGVSSYMLMRRGSRVHYCFFNLGGSAHEIGVKQVAHYLWNRFGRSHKVHFVAVDFEPVVAEILEKIDDGQMGVVLKRMMVRAASRVAERYGVQAIVTGEALGQVSSQTLTNLRLIDNATDTLILRPLITHDKENIINIARQIGTEDFARTMPEFCGVISKNPTVKAVKAKIEAEEEKFDFSILDSVVENAKNMDIRRIAEETVQQVTEVEMVSEFATNDVVLDIRSPEEQENSPLKLEGVDVKELPFYKLSTQFGDLDNSKTYLLYCERGMMSRLQALYLREQGFNNVKVYRKK.

Positions 61-165 (EAVCDALTRI…DDKLILVNAR (105 aa)) constitute a THUMP domain. ATP contacts are provided by residues 183 to 184 (LI), K265, G287, and Q296. C344 and C456 are disulfide-bonded. Residues 404 to 483 (FATNDVVLDI…FNNVKVYRKK (80 aa)) form the Rhodanese domain. The Cysteine persulfide intermediate role is filled by C456.

This sequence belongs to the ThiI family.

Its subcellular location is the cytoplasm. The catalysed reaction is [ThiI sulfur-carrier protein]-S-sulfanyl-L-cysteine + a uridine in tRNA + 2 reduced [2Fe-2S]-[ferredoxin] + ATP + H(+) = [ThiI sulfur-carrier protein]-L-cysteine + a 4-thiouridine in tRNA + 2 oxidized [2Fe-2S]-[ferredoxin] + AMP + diphosphate. It carries out the reaction [ThiS sulfur-carrier protein]-C-terminal Gly-Gly-AMP + S-sulfanyl-L-cysteinyl-[cysteine desulfurase] + AH2 = [ThiS sulfur-carrier protein]-C-terminal-Gly-aminoethanethioate + L-cysteinyl-[cysteine desulfurase] + A + AMP + 2 H(+). Its pathway is cofactor biosynthesis; thiamine diphosphate biosynthesis. In terms of biological role, catalyzes the ATP-dependent transfer of a sulfur to tRNA to produce 4-thiouridine in position 8 of tRNAs, which functions as a near-UV photosensor. Also catalyzes the transfer of sulfur to the sulfur carrier protein ThiS, forming ThiS-thiocarboxylate. This is a step in the synthesis of thiazole, in the thiamine biosynthesis pathway. The sulfur is donated as persulfide by IscS. The protein is tRNA sulfurtransferase of Proteus mirabilis (strain HI4320).